The following is an 89-amino-acid chain: Small ribosomal subunit protein uS15 (89 aa).

This sequence belongs to the universal ribosomal protein uS15 family. As to quaternary structure, part of the 30S ribosomal subunit. Forms a bridge to the 50S subunit in the 70S ribosome, contacting the 23S rRNA.

Its function is as follows. One of the primary rRNA binding proteins, it binds directly to 16S rRNA where it helps nucleate assembly of the platform of the 30S subunit by binding and bridging several RNA helices of the 16S rRNA. In terms of biological role, forms an intersubunit bridge (bridge B4) with the 23S rRNA of the 50S subunit in the ribosome. The sequence is that of Small ribosomal subunit protein uS15 from Pediococcus pentosaceus (strain ATCC 25745 / CCUG 21536 / LMG 10740 / 183-1w).